An 883-amino-acid chain; its full sequence is Phosphoenolpyruvate carboxylase (883 aa).

Residues histidine 138 and lysine 546 contribute to the active site.

This sequence belongs to the PEPCase type 1 family. It depends on Mg(2+) as a cofactor.

It catalyses the reaction oxaloacetate + phosphate = phosphoenolpyruvate + hydrogencarbonate. Its function is as follows. Forms oxaloacetate, a four-carbon dicarboxylic acid source for the tricarboxylic acid cycle. The polypeptide is Phosphoenolpyruvate carboxylase (Escherichia coli O45:K1 (strain S88 / ExPEC)).